The following is a 142-amino-acid chain: Mitochondrial import receptor subunit TOM22 homolog (142 aa).

The segment covering 1–11 (MAAAVAAAGAG) has biased composition (low complexity). Residues 1–40 (MAAAVAAAGAGEPLSPEELVPKAEAEKAEEDLEEDDDDEL) form a disordered region. Ala-2 carries the N-acetylalanine modification. At 2 to 82 (AAAVAAAGAG…VAQKMYRFSR (81 aa)) the chain is on the cytoplasmic side. Ser-15 carries the phosphoserine modification. Over residues 27 to 40 (KAEEDLEEDDDDEL) the composition is skewed to acidic residues. An import sequence; necessary for mitochondrion outer membrane localization and integration in the TOM complex region spans residues 41–50 (DETLSERLWG). The residue at position 43 (Thr-43) is a Phosphothreonine. Ser-45 is subject to Phosphoserine. Residues 83–103 (AALWIGTTSFMILVLPVVFET) traverse the membrane as a helical segment. A TMD; necessary for mitochondrion outer membrane localization and integration in the TOM complex region spans residues 83–103 (AALWIGTTSFMILVLPVVFET). At 104–142 (EKLQMEQQQQLQQRQILLGPNTGLSGGMPGALPPLPGKI) the chain is on the mitochondrial intermembrane side. Positions 123 to 142 (PNTGLSGGMPGALPPLPGKI) are C-tail signal; necessary for mitochondrion outer membrane localization and integration in the TOM complex.

It belongs to the Tom22 family. Forms part of the preprotein translocase complex of the outer mitochondrial membrane (TOM complex) which consists of at least 7 different proteins (TOMM5, TOMM6, TOMM7, TOMM20, TOMM22, TOMM40 and TOMM70). Interacts with TOMM40. Interacts with PPP2R2B.

It is found in the mitochondrion outer membrane. Its function is as follows. Central receptor component of the translocase of the outer membrane of mitochondria (TOM complex) responsible for the recognition and translocation of cytosolically synthesized mitochondrial preproteins. Together with the peripheral receptor TOM20 functions as the transit peptide receptor and facilitates the movement of preproteins into the translocation pore. Required for the translocation across the mitochondrial outer membrane of cytochrome P450 monooxygenases. This is Mitochondrial import receptor subunit TOM22 homolog (Tomm22) from Rattus norvegicus (Rat).